The chain runs to 178 residues: Large ribosomal subunit protein bL25 (178 aa).

This sequence belongs to the bacterial ribosomal protein bL25 family. CTC subfamily. In terms of assembly, part of the 50S ribosomal subunit; part of the 5S rRNA/L5/L18/L25 subcomplex. Contacts the 5S rRNA. Binds to the 5S rRNA independently of L5 and L18.

Its function is as follows. This is one of the proteins that binds to the 5S RNA in the ribosome where it forms part of the central protuberance. This Helicobacter pylori (strain J99 / ATCC 700824) (Campylobacter pylori J99) protein is Large ribosomal subunit protein bL25.